The sequence spans 211 residues: Octanoyltransferase (211 aa).

In terms of domain architecture, BPL/LPL catalytic spans 32–211 (DHEPEIIYLV…IQTEFNKIFK (180 aa)). Substrate-binding positions include 71–78 (RGGKFTFH), 145–147 (AIG), and 158–160 (GVA). Catalysis depends on Cys-176, which acts as the Acyl-thioester intermediate.

It belongs to the LipB family.

It localises to the cytoplasm. The enzyme catalyses octanoyl-[ACP] + L-lysyl-[protein] = N(6)-octanoyl-L-lysyl-[protein] + holo-[ACP] + H(+). The protein operates within protein modification; protein lipoylation via endogenous pathway; protein N(6)-(lipoyl)lysine from octanoyl-[acyl-carrier-protein]: step 1/2. In terms of biological role, catalyzes the transfer of endogenously produced octanoic acid from octanoyl-acyl-carrier-protein onto the lipoyl domains of lipoate-dependent enzymes. Lipoyl-ACP can also act as a substrate although octanoyl-ACP is likely to be the physiological substrate. The sequence is that of Octanoyltransferase from Rickettsia massiliae (strain Mtu5).